Consider the following 346-residue polypeptide: Probable RNA methyltransferase PA1839 (346 aa).

The active-site Proton acceptor is glutamate 91. The Radical SAM core domain occupies 94–320 (LLPRGGLCVS…TKVRNSAGQD (227 aa)). Cysteine 101 and cysteine 325 are oxidised to a cystine. Residues cysteine 108, cysteine 112, and cysteine 115 each contribute to the [4Fe-4S] cluster site. S-adenosyl-L-methionine contacts are provided by residues 153–154 (GE), serine 183, 206–208 (SLH), and asparagine 282. Cysteine 325 functions as the S-methylcysteine intermediate in the catalytic mechanism.

This sequence belongs to the radical SAM superfamily. RlmN family. It depends on [4Fe-4S] cluster as a cofactor.

The protein resides in the cytoplasm. In Pseudomonas aeruginosa (strain ATCC 15692 / DSM 22644 / CIP 104116 / JCM 14847 / LMG 12228 / 1C / PRS 101 / PAO1), this protein is Probable RNA methyltransferase PA1839.